The sequence spans 507 residues: Dolichyl pyrophosphate Man9GlcNAc2 alpha-1,3-glucosyltransferase (507 aa).

The Cytoplasmic segment spans residues 1 to 2 (ME). The chain crosses the membrane as a helical span at residues 3–23 (SWTWMTVVVLLGLTVRWTVSL). Topologically, residues 24–114 (NSYSGAGKPP…SQAHKLFMRT (91 aa)) are lumenal. Asparagine 59 carries an N-linked (GlcNAc...) asparagine glycan. Residues 115–135 (TVLAADLLIYIPAVLLYCYSL) traverse the membrane as a helical segment. Residues 136-143 (KEISPKRK) are Cytoplasmic-facing. Residues 144-164 (IASALCILLYPGLILIDYGHF) form a helical membrane-spanning segment. The Lumenal portion of the chain corresponds to 165–172 (QYNSVSLG). A helical transmembrane segment spans residues 173–193 (FALWGVLGVSCDWDLLGSLAF). The Cytoplasmic segment spans residues 194-229 (CLALNYKQMELYHSLPFFCFLLGKCFKKGLRGKGSA). Residues 230-250 (LFIRIACTVVASFLLCWLPFL) traverse the membrane as a helical segment. At 251–297 (TEREHALQVVRRLFPVDRGLFEDKVANIWCSLNVFLKIKDILPRHIQ) the chain is on the lumenal side. A helical membrane pass occupies residues 298 to 318 (IAISFCFTFLSLLPACIKLTV). Residues 319–332 (QPSAKGFRFTLVSC) lie on the Cytoplasmic side of the membrane. Residues 333-353 (ALSFFLFSFQVHEKSILLVSL) form a helical membrane-spanning segment. Over 354–361 (PVCLVLTE) the chain is Lumenal. The chain crosses the membrane as a helical span at residues 362–382 (IPFMSTWFLLVSTFSMLPLLL). The Cytoplasmic segment spans residues 383–385 (KDQ). The chain crosses the membrane as a helical span at residues 386–406 (LLLPSVVTVMAFLIACSTFFP). Over 407-437 (MFENTSEEQLQLKSFAVSVRRHLPGFTFLPR) the chain is Lumenal. A helical transmembrane segment spans residues 438–458 (IIQCLFLSSVITMILLTILSV). The Cytoplasmic portion of the chain corresponds to 459–468 (TLDPPQKLPD). A helical transmembrane segment spans residues 469–489 (LFSVLICFVSCVNFVFFLVYF). At 490 to 507 (NIVIMWDSKNGRNRKKID) the chain is on the lumenal side.

Belongs to the ALG6/ALG8 glucosyltransferase family.

It localises to the endoplasmic reticulum membrane. It catalyses the reaction an alpha-D-Man-(1-&gt;2)-alpha-D-Man-(1-&gt;2)-alpha-D-Man-(1-&gt;3)-[alpha-D-Man-(1-&gt;2)-alpha-D-Man-(1-&gt;3)-[alpha-D-Man-(1-&gt;2)-alpha-D-Man-(1-&gt;6)]-alpha-D-Man-(1-&gt;6)]-beta-D-Man-(1-&gt;4)-beta-D-GlcNAc-(1-&gt;4)-alpha-D-GlcNAc-diphospho-di-trans,poly-cis-dolichol + a di-trans,poly-cis-dolichyl beta-D-glucosyl phosphate = an alpha-D-Glc-(1-&gt;3)-alpha-D-Man-(1-&gt;2)-alpha-D-Man-(1-&gt;2)-alpha-D-Man-(1-&gt;3)-[alpha-D-Man-(1-&gt;2)-alpha-D-Man-(1-&gt;3)-[alpha-D-Man-(1-&gt;2)-alpha-D-Man-(1-&gt;6)]-alpha-D-Man-(1-&gt;6)]-beta-D-Man-(1-&gt;4)-beta-D-GlcNAc-(1-&gt;4)-alpha-D-GlcNAc-diphospho-di-trans,poly-cis-dolichol + a di-trans,poly-cis-dolichyl phosphate + H(+). Its pathway is protein modification; protein glycosylation. In terms of biological role, dolichyl pyrophosphate Man9GlcNAc2 alpha-1,3-glucosyltransferase that operates in the biosynthetic pathway of dolichol-linked oligosaccharides, the glycan precursors employed in protein asparagine (N)-glycosylation. The assembly of dolichol-linked oligosaccharides begins on the cytosolic side of the endoplasmic reticulum membrane and finishes in its lumen. The sequential addition of sugars to dolichol pyrophosphate produces dolichol-linked oligosaccharides containing fourteen sugars, including two GlcNAcs, nine mannoses and three glucoses. Once assembled, the oligosaccharide is transferred from the lipid to nascent proteins by oligosaccharyltransferases. In the lumen of the endoplasmic reticulum, adds the first glucose residue from dolichyl phosphate glucose (Dol-P-Glc) onto the lipid-linked oligosaccharide intermediate Man(9)GlcNAc(2)-PP-Dol to produce Glc(1)Man(9)GlcNAc(2)-PP-Dol. Glc(1)Man(9)GlcNAc(2)-PP-Dol is a substrate for ALG8, the following enzyme in the biosynthetic pathway. The chain is Dolichyl pyrophosphate Man9GlcNAc2 alpha-1,3-glucosyltransferase from Rattus norvegicus (Rat).